The chain runs to 352 residues: Holliday junction branch migration complex subunit RuvB (352 aa).

The tract at residues M1–Y182 is large ATPase domain (RuvB-L). ATP is bound by residues I21, R22, G63, K66, T67, T68, E129–F131, R172, Y182, and R219. Residue T67 participates in Mg(2+) binding. The segment at E183–E253 is small ATPAse domain (RuvB-S). Positions E256 to D352 are head domain (RuvB-H). Positions 292, 311, and 316 each coordinate DNA.

It belongs to the RuvB family. As to quaternary structure, homohexamer. Forms an RuvA(8)-RuvB(12)-Holliday junction (HJ) complex. HJ DNA is sandwiched between 2 RuvA tetramers; dsDNA enters through RuvA and exits via RuvB. An RuvB hexamer assembles on each DNA strand where it exits the tetramer. Each RuvB hexamer is contacted by two RuvA subunits (via domain III) on 2 adjacent RuvB subunits; this complex drives branch migration. In the full resolvosome a probable DNA-RuvA(4)-RuvB(12)-RuvC(2) complex forms which resolves the HJ.

The protein resides in the cytoplasm. The enzyme catalyses ATP + H2O = ADP + phosphate + H(+). Its function is as follows. The RuvA-RuvB-RuvC complex processes Holliday junction (HJ) DNA during genetic recombination and DNA repair, while the RuvA-RuvB complex plays an important role in the rescue of blocked DNA replication forks via replication fork reversal (RFR). RuvA specifically binds to HJ cruciform DNA, conferring on it an open structure. The RuvB hexamer acts as an ATP-dependent pump, pulling dsDNA into and through the RuvAB complex. RuvB forms 2 homohexamers on either side of HJ DNA bound by 1 or 2 RuvA tetramers; 4 subunits per hexamer contact DNA at a time. Coordinated motions by a converter formed by DNA-disengaged RuvB subunits stimulates ATP hydrolysis and nucleotide exchange. Immobilization of the converter enables RuvB to convert the ATP-contained energy into a lever motion, pulling 2 nucleotides of DNA out of the RuvA tetramer per ATP hydrolyzed, thus driving DNA branch migration. The RuvB motors rotate together with the DNA substrate, which together with the progressing nucleotide cycle form the mechanistic basis for DNA recombination by continuous HJ branch migration. Branch migration allows RuvC to scan DNA until it finds its consensus sequence, where it cleaves and resolves cruciform DNA. The protein is Holliday junction branch migration complex subunit RuvB of Chlorobium chlorochromatii (strain CaD3).